A 267-amino-acid chain; its full sequence is Malonyl-[acyl-carrier protein] O-methyltransferase (267 aa).

The protein belongs to the methyltransferase superfamily.

The enzyme catalyses malonyl-[ACP] + S-adenosyl-L-methionine = malonyl-[ACP] methyl ester + S-adenosyl-L-homocysteine. It functions in the pathway cofactor biosynthesis; biotin biosynthesis. Converts the free carboxyl group of a malonyl-thioester to its methyl ester by transfer of a methyl group from S-adenosyl-L-methionine (SAM). It allows to synthesize pimeloyl-ACP via the fatty acid synthetic pathway. The chain is Malonyl-[acyl-carrier protein] O-methyltransferase from Yersinia pestis.